We begin with the raw amino-acid sequence, 362 residues long: 3-dehydroquinate synthase (362 aa).

Residues 71–76 (DGEQYK), 105–109 (GVVGD), 129–130 (TT), lysine 142, lysine 151, and 169–172 (CLNT) contribute to the NAD(+) site. Positions 184, 247, and 264 each coordinate Zn(2+).

Belongs to the sugar phosphate cyclases superfamily. Dehydroquinate synthase family. Co(2+) serves as cofactor. Requires Zn(2+) as cofactor. The cofactor is NAD(+).

The protein resides in the cytoplasm. It carries out the reaction 7-phospho-2-dehydro-3-deoxy-D-arabino-heptonate = 3-dehydroquinate + phosphate. The protein operates within metabolic intermediate biosynthesis; chorismate biosynthesis; chorismate from D-erythrose 4-phosphate and phosphoenolpyruvate: step 2/7. Its function is as follows. Catalyzes the conversion of 3-deoxy-D-arabino-heptulosonate 7-phosphate (DAHP) to dehydroquinate (DHQ). The protein is 3-dehydroquinate synthase of Enterobacter sp. (strain 638).